Here is a 689-residue protein sequence, read N- to C-terminus: Shutoff protein (689 aa).

Positions 1–24 (MSEEPVSGTTVEIEEDTHTPPNSP) are disordered. Residues 226-289 (VMNNLLVKRA…SVLVTVVLEC (64 aa)) form a binding to host EIF4G region. The RRM domain maps to 292–410 (RLFTSKDMVK…PLYTETSQRL (119 aa)). Phosphotyrosine; by host occurs at positions 309 and 627. The interval 625 to 689 (GQYLDPHTGE…GEPDVRGTTS (65 aa)) is disordered. A compositionally biased stretch (basic and acidic residues) spans 645–655 (SGHEFQGDGRH). The segment covering 656–675 (REPKRGRHFRQRGGPRKPPR) has biased composition (basic residues). The span at 678 to 689 (AGGEPDVRGTTS) shows a compositional bias: basic and acidic residues.

This sequence belongs to the adenoviridae shutoff protein family. In terms of assembly, monomer. Interacts with hexon protein; this interaction allows chaperoning and trimerization of hexon proteins. Interacts (via N-terminus) with host initiation factor EIF4G (via C-terminus). Interacts (via RRM domain) with viral mRNAs that contain the tripartite leader; this interaction allows ribosome shunting and expression of viral late mRNAs. Post-translationally, might be cleaved by the viral protease. Phosphorylated. Tyrosine phosphorylation enhances preferential binding to tripartite leader mRNAs and allows ribosome shunting. In terms of processing, methylated. Asymmetric dimethylation by host PRMT1 of the Arg/Gly-rich region may regulate shutoff protein binding to hexon and promote the capsid assembly in the nucleus.

The protein localises to the host cytoplasm. Functionally, protein that inhibits host translation while promoting late viral translation by ribosome shunting. Blocks host cap-dependent translation by binding to eIF4G, displacing MKNK1 from cap initiation complexes and preventing EIF4E phosphorylation. Binds to the tripartite leader sequence of viral late mRNAs and recruits host eIF4G, PABPC1/poly-A binding protein and 40S ribosomes subunits on viral mRNAs, allowing ribosome shunting and efficient translation of late viral mRNAs even though conventional translation via ribosome scanning from the cap has been shut off in the host cell. During assembly, acts as a chaperone protein that helps hexon proteins assembly into trimers. In Canis lupus familiaris (Dog), this protein is Shutoff protein.